The sequence spans 426 residues: Histidine--tRNA ligase (426 aa).

The protein belongs to the class-II aminoacyl-tRNA synthetase family.

The protein localises to the cytoplasm. It catalyses the reaction tRNA(His) + L-histidine + ATP = L-histidyl-tRNA(His) + AMP + diphosphate + H(+). This Sulfurisphaera tokodaii (strain DSM 16993 / JCM 10545 / NBRC 100140 / 7) (Sulfolobus tokodaii) protein is Histidine--tRNA ligase.